Here is a 358-residue protein sequence, read N- to C-terminus: Fructose-bisphosphate aldolase 3, cytoplasmic (358 aa).

Arginine 39 is a binding site for substrate. The Proton acceptor role is filled by glutamate 183. Lysine 225 (schiff-base intermediate with dihydroxyacetone-P) is an active-site residue. Substrate is bound by residues 266–268 (SGG) and arginine 298.

The protein belongs to the class I fructose-bisphosphate aldolase family. Homotetramer.

It is found in the cytoplasm. Its subcellular location is the cytosol. It carries out the reaction beta-D-fructose 1,6-bisphosphate = D-glyceraldehyde 3-phosphate + dihydroxyacetone phosphate. It participates in carbohydrate degradation; glycolysis; D-glyceraldehyde 3-phosphate and glycerone phosphate from D-glucose: step 4/4. Its function is as follows. Fructose-bisphosphate aldolase that plays a key role in glycolysis and gluconeogenesis. The polypeptide is Fructose-bisphosphate aldolase 3, cytoplasmic (Oryza sativa subsp. japonica (Rice)).